The following is a 699-amino-acid chain: Polyribonucleotide nucleotidyltransferase (699 aa).

Mg(2+) is bound by residues Asp488 and Asp494. One can recognise a KH domain in the interval 555–614 (PRIYSIKVNPDKIKDVIGKGGSVIRSLTEETNTIIDIEDNGIIKIVALDYDKAKQAIRRI). Residues 624–692 (GAVYTGKVSH…RQGRIRLSMK (69 aa)) form the S1 motif domain.

This sequence belongs to the polyribonucleotide nucleotidyltransferase family. Component of the RNA degradosome, which is a multiprotein complex involved in RNA processing and mRNA degradation. Requires Mg(2+) as cofactor.

The protein resides in the cytoplasm. The catalysed reaction is RNA(n+1) + phosphate = RNA(n) + a ribonucleoside 5'-diphosphate. In terms of biological role, involved in mRNA degradation. Catalyzes the phosphorolysis of single-stranded polyribonucleotides processively in the 3'- to 5'-direction. The protein is Polyribonucleotide nucleotidyltransferase of Blochmanniella pennsylvanica (strain BPEN).